Reading from the N-terminus, the 327-residue chain is Trypsin-like protease try-5 (327 aa).

Residues M1 to L21 form the signal peptide. The 285-residue stretch at A43–A327 folds into the Peptidase S1 domain. An intrachain disulfide couples C73 to C89. Catalysis depends on charge relay system residues H88 and D173. N207 carries N-linked (GlcNAc...) asparagine glycosylation. Cystine bridges form between C242-C256 and C266-C296. Residue S270 is the Charge relay system of the active site.

This sequence belongs to the peptidase S1 family. Specifically expressed in the male gonad including the seminal vesicle, the valve region and the vas deferens.

Its subcellular location is the secreted. It localises to the cytoplasmic vesicle. The protein resides in the secretory vesicle lumen. In the male gonad, probably maintained inactive by swm-1. Its function is as follows. Serine protease which, in males, acts as a promoting signal during mating to activate sperm. This Caenorhabditis elegans protein is Trypsin-like protease try-5.